Here is a 457-residue protein sequence, read N- to C-terminus: Probable ECA polymerase (457 aa).

Transmembrane regions (helical) follow at residues 3-23 (LLQF…ILTL), 41-61 (MLFL…VFGF), 65-85 (VVPA…YAIY), 118-138 (IMAL…GFLL), 154-174 (GVAL…VYFL), 181-201 (WLLF…IVGG), 206-226 (IIIA…ITLW), 227-247 (MLAL…LKRY), 340-360 (LVVM…GLII), 377-397 (YKAA…IVLA), and 408-428 (VVFF…LYWL).

This sequence belongs to the WzyE family. As to quaternary structure, probably part of a complex composed of WzxE, WzyE and WzzE.

The protein localises to the cell inner membrane. The protein operates within bacterial outer membrane biogenesis; enterobacterial common antigen biosynthesis. In terms of biological role, probably involved in the polymerization of enterobacterial common antigen (ECA) trisaccharide repeat units. This is Probable ECA polymerase from Erwinia tasmaniensis (strain DSM 17950 / CFBP 7177 / CIP 109463 / NCPPB 4357 / Et1/99).